A 5068-amino-acid polypeptide reads, in one-letter code: Protein piccolo (5068 aa).

The span at 1-20 (MGNEASLEGEGLPEGLAAAA) shows a compositional bias: low complexity. 2 disordered regions span residues 1–143 (MGNE…DFKE) and 173–524 (FDLI…QAPA). Over residues 93 to 102 (PGKPPDPGRP) the composition is skewed to pro residues. 3 stretches are compositionally biased toward basic and acidic residues: residues 111 to 122 (RTTDTFRSEQKL), 133 to 143 (KESKSRTDFKE), and 185 to 199 (ETTK…DQGK). A Phosphoserine modification is found at Ser212. A compositionally biased stretch (polar residues) spans 232–241 (PSKSVSSQQA). Over residues 252–279 (AKPSQQSPAQTPAQQAKPVAQQPGPAKA) the composition is skewed to low complexity. Residues 319–334 (TSLQQPGPKSLAQTPG) show a composition bias toward polar residues. Pro residues-rich tracts occupy residues 391–407 (PTKP…PQPQ) and 416–487 (PQQP…PQPQ). Residues 401–500 (PAKPQPQQPV…LGKPSAQQPS (100 aa)) are 10 X 10 AA tandem approximate repeats of P-A-K-P-Q-P-Q-Q-P-X. Residues 495–508 (SAQQPSKSISQTVT) are compositionally biased toward polar residues. Residues 515 to 524 (PPTSAAQAPA) are compositionally biased toward low complexity. The C4-type zinc finger occupies 532 to 556 (CPLCNTTELLLHTPEKANFNTCTEC). Disordered stretches follow at residues 594 to 867 (AAIP…TVTG), 883 to 1005 (LIST…TELN), 1057 to 1345 (LGDM…PSDL), and 1364 to 1803 (VGEK…SDPE). Residues 610-625 (QPATASKSPVPSQQAS) show a composition bias toward polar residues. The span at 626–644 (PKKELPSKQDSPKAPESKK) shows a compositional bias: basic and acidic residues. The segment covering 709 to 738 (SPSSAAATSKPAILSSQVQAQAQVTTAPPL) has biased composition (low complexity). A compositionally biased stretch (basic and acidic residues) spans 782–795 (ESKDPVQKKEEPKK). Over residues 809 to 830 (VPKGSPTPSGTRPTTGQATPQS) the composition is skewed to low complexity. A phosphoserine mark is found at Ser844 and Ser856. Composition is skewed to polar residues over residues 856 to 865 (SQPTTPQETV) and 883 to 893 (LISTAGQQAPH). Thr860 is subject to Phosphothreonine. A C4-type zinc finger spans residues 997–1020 (CPLCRTELNVGSQDPPNFNTCTEC). A compositionally biased stretch (pro residues) spans 1073–1085 (SPVPAPAEPPPQK). Residues 1097-1116 (KETEVKAETEKQIPEKETPS) are compositionally biased toward basic and acidic residues. Thr1120 is modified (phosphothreonine). 4 stretches are compositionally biased toward basic and acidic residues: residues 1144-1165 (PEKK…KKPP), 1172-1186 (LEEK…KLPP), 1244-1253 (PKDRQKESRD), and 1262-1283 (TAKE…DKSD). Positions 1290-1306 (PKSPQGLSDTGYSSDGI) are enriched in polar residues. Phosphoserine occurs at positions 1292, 1302, 1303, 1332, 1334, 1337, 1338, and 1341. Positions 1319-1333 (SDEKDLLKGLKKDSF) are enriched in basic and acidic residues. Low complexity predominate over residues 1334–1343 (SQESSPSSPS). The segment covering 1374 to 1392 (PQKVSPEQPQDQQKTQTPS) has biased composition (polar residues). Positions 1405 to 1444 (KESQEKKVTSKKDSAQGFPSRKEHKENPELVDDLSPRRAS) are enriched in basic and acidic residues. Phosphoserine occurs at positions 1439, 1451, 1452, 1454, 1457, 1481, 1484, 1505, and 1507. Over residues 1499-1511 (SADEDASGSEDEE) the composition is skewed to acidic residues. Phosphothreonine is present on Thr1552. Phosphoserine is present on residues Ser1553, Ser1563, and Ser1575. A compositionally biased stretch (acidic residues) spans 1566 to 1575 (DEDDETFDES). Basic and acidic residues predominate over residues 1576–1587 (PELKFRETKSQE). The span at 1606 to 1624 (ELNSTVTDKYSAESSQKKT) shows a compositional bias: polar residues. Acidic residues predominate over residues 1628–1638 (FDEEPELEMES). Ser1638 bears the Phosphoserine mark. Thr1640 carries the post-translational modification Phosphothreonine. A phosphoserine mark is found at Ser1642 and Ser1647. The segment covering 1650–1667 (EGSSSLHASSFTPGTSPT) has biased composition (polar residues). Positions 1707–1720 (DSSEEEELREEEEL) are enriched in acidic residues. Phosphoserine occurs at positions 1708 and 1709. Positions 1721–1734 (LKEQEKQRELEQQQ) are enriched in basic and acidic residues. Phosphothreonine is present on Thr1760. Ser1766 is modified (phosphoserine). The segment covering 1775–1790 (EELRQAAEMEELHRSS) has biased composition (basic and acidic residues). Residues Ser1795, Ser1800, Ser1808, and Ser1829 each carry the phosphoserine modification. Disordered stretches follow at residues 2104-2126 (PSES…ISSV) and 2261-2377 (EAEL…AAAA). The span at 2109–2126 (TSVPPSDTPSLTSSISSV) shows a compositional bias: low complexity. Polar residues predominate over residues 2277-2291 (TPSSQTKEQPGSPHS). Residues 2334–2368 (QPPPPPPPPPPPPPPPPPPPPPPLPPATSPKPPTY) show a composition bias toward pro residues. Ser2495 carries the phosphoserine modification. The O-linked (GlcNAc) threonine glycan is linked to Thr2686. Residue Ser2960 is glycosylated (O-linked (GlcNAc) serine). At Thr2998 the chain carries Phosphothreonine. 2 disordered regions span residues 3334–3443 (KEEK…SKVS) and 3490–3556 (KGGS…LYSP). Residue Ser3358 is modified to Phosphoserine. Positions 3361 to 3370 (DDPRNLKKIV) are enriched in basic and acidic residues. A Phosphoserine modification is found at Ser3372. 2 positions are modified to phosphothreonine: Thr3376 and Thr3403. The segment covering 3403-3412 (TDDEDQDEWD) has biased composition (acidic residues). Over residues 3495–3507 (GCQTETDPDTQSP) the composition is skewed to polar residues. A phosphoserine mark is found at Ser3506, Ser3514, Ser3545, Ser3549, Ser3555, Ser3558, Ser3561, Ser3582, Ser3608, Ser3610, and Ser3616. Disordered regions lie at residues 3576 to 3679 (PLPD…RRRM) and 3760 to 3797 (DYMS…QFIP). Composition is skewed to polar residues over residues 3636–3645 (KGSQTTSGTQ) and 3661–3673 (STGT…TMGT). Ser3763 carries the post-translational modification Phosphoserine. The span at 3773–3785 (SRVESQHGIERPR) shows a compositional bias: basic and acidic residues. Over residues 3787 to 3797 (APQTEFSQFIP) the composition is skewed to polar residues. Residues Ser4016, Ser4042, and Ser4132 each carry the phosphoserine modification. Disordered regions lie at residues 4207–4231 (ADKP…GLDL) and 4254–4273 (VSFG…LPIS). Over residues 4210-4231 (PYSSGSRSRPSSRPSSVYGLDL) the composition is skewed to low complexity. The span at 4257–4273 (GHSSSSARTKPTSLPIS) shows a compositional bias: polar residues. Residues Ser4286, Ser4290, Ser4293, Ser4322, and Ser4358 each carry the phosphoserine modification. A disordered region spans residues 4317-4339 (RDQFGSSHSLPEVQQHMREESRT). Positions 4424–4518 (RIKITRDSKD…EAEICVRLDL (95 aa)) constitute a PDZ domain. Positions 4574-4620 (KGAHAHSGPTSAGSSSVPSPGQPGSPSVSKKKHGGSKPTDVSKTASH) are disordered. The span at 4578-4601 (AHSGPTSAGSSSVPSPGQPGSPSV) shows a compositional bias: low complexity. Position 4592 is a phosphoserine (Ser4592). Positions 4622–4751 (ITGEIQLQIN…SHLDNTPRWY (130 aa)) constitute a C2 1 domain. Asp4651 and Asp4657 together coordinate Ca(2+). Phosphoserine is present on Ser4706. 4 residues coordinate Ca(2+): Asp4721, Asp4723, Ser4726, and Asp4729. 2 disordered regions span residues 4758–4834 (ESIE…SVAQ) and 4857–4891 (QPTK…SEGS). Low complexity-rich tracts occupy residues 4766-4778 (HSSQ…PKPS) and 4805-4815 (SSPGSSKSSSE). Positions 4823–4834 (PSRSQSKTSVAQ) are enriched in polar residues. Residues 4870 to 4891 (SVSTGSSGSSVGSGYSVDSEGS) are compositionally biased toward low complexity. Positions 4933–5058 (VMGEIKLALK…DLRKRIVNWH (126 aa)) constitute a C2 2 domain.

In terms of assembly, interacts with BSN, ERC2/CAST1, RIMS1 and UNC13A. Interacts (via C-terminus) with TRIO (via N-terminus). Interacts with CTBP1. Interacts with SIAH1; this interaction negatively regulates SIAH1 E3 ligase activity. Directly interacts with GIT1 and GIT2. The cofactor is Ca(2+). In terms of tissue distribution, highly expressed in brain. Moderately expressed in pituitary gland and pancreatic islets. Low levels found in stomach.

Its subcellular location is the presynaptic active zone. Its function is as follows. Scaffold protein of the presynaptic cytomatrix at the active zone (CAZ) which is the place in the synapse where neurotransmitter is released. After synthesis, participates in the formation of Golgi-derived membranous organelles termed Piccolo-Bassoon transport vesicles (PTVs) that are transported along axons to sites of nascent synaptic contacts. At the presynaptic active zone, regulates the spatial organization of synaptic vesicle cluster, the protein complexes that execute membrane fusion and compensatory endocytosis. Organizes as well the readily releasable pool of synaptic vesicles and safeguards a fraction of them to be not immediately available for action potential-induced release. Also functions in processes other than assembly such as the regulation of specific presynaptic protein ubiquitination by interacting with SIAH1 or the regulation of presynaptic autophagy. Also mediates synapse to nucleus communication leading to reconfiguration of gene expression by associating with the transcriptional corepressor CTBP1 and by subsequently reducing the size of its pool available for nuclear import. This chain is Protein piccolo, found in Mus musculus (Mouse).